The following is a 226-amino-acid chain: Fibrillarin-like rRNA/tRNA 2'-O-methyltransferase (226 aa).

S-adenosyl-L-methionine contacts are provided by residues 82-83 (TT), 100-101 (EF), 125-126 (DA), and 145-148 (DVAQ).

The protein belongs to the methyltransferase superfamily. Fibrillarin family. Interacts with nop5. Component of box C/D small ribonucleoprotein (sRNP) particles that contain rpl7ae, FlpA and nop5, plus a guide RNA.

Its function is as follows. Involved in pre-rRNA and tRNA processing. Utilizes the methyl donor S-adenosyl-L-methionine to catalyze the site-specific 2'-hydroxyl methylation of ribose moieties in rRNA and tRNA. Site specificity is provided by a guide RNA that base pairs with the substrate. Methylation occurs at a characteristic distance from the sequence involved in base pairing with the guide RNA. The polypeptide is Fibrillarin-like rRNA/tRNA 2'-O-methyltransferase (Methanosarcina barkeri (strain Fusaro / DSM 804)).